Consider the following 139-residue polypeptide: Putative pre-16S rRNA nuclease (139 aa).

This sequence belongs to the YqgF nuclease family.

The protein localises to the cytoplasm. Could be a nuclease involved in processing of the 5'-end of pre-16S rRNA. The protein is Putative pre-16S rRNA nuclease of Streptococcus mutans serotype c (strain ATCC 700610 / UA159).